The chain runs to 457 residues: COBRA-like protein 3 (457 aa).

The N-terminal stretch at 1 to 35 (MAVGGAGSSRSVAPCCCCAVLLAAALLFSAPATTE) is a signal peptide. 9 N-linked (GlcNAc...) asparagine glycosylation sites follow: Asn-45, Asn-170, Asn-178, Asn-217, Asn-242, Asn-258, Asn-326, Asn-341, and Asn-361. Asn-430 carries the GPI-anchor amidated asparagine lipid modification. A propeptide spans 431-457 (ASPLTKQPLTLSVLVFSIVLATLLAYA) (removed in mature form). The chain crosses the membrane as a helical span at residues 437–457 (QPLTLSVLVFSIVLATLLAYA).

Belongs to the COBRA family.

Its subcellular location is the cell membrane. Functionally, involved in determining the orientation of cell expansion, probably by playing an important role in cellulose deposition. May act by recruiting cellulose synthesizing complexes to discrete positions on the cell surface. In Oryza sativa subsp. japonica (Rice), this protein is COBRA-like protein 3 (BC1L4).